The sequence spans 85 residues: Large ribosomal subunit protein bL27 (85 aa).

The protein belongs to the bacterial ribosomal protein bL27 family.

This is Large ribosomal subunit protein bL27 from Pseudomonas fluorescens (strain ATCC BAA-477 / NRRL B-23932 / Pf-5).